We begin with the raw amino-acid sequence, 682 residues long: Protein ACTIVITY OF BC1 COMPLEX KINASE 1, chloroplastic (682 aa).

Residues 1–79 constitute a chloroplast transit peptide; it reads MESIHCNSLL…NSTDASVMTT (79 aa). A Protein kinase domain is found at 236 to 567; it reads KISSQTIAAA…IQVLFKDGVF (332 aa). ATP-binding positions include 242 to 250 and lysine 265; that span reads IAAASLGQV. Aspartate 400 acts as the Proton acceptor in catalysis.

The protein belongs to the protein kinase superfamily. ADCK protein kinase family. Interacts with ABC1K3 in plastoglobules (PG). Expressed in all tissues (e.g. especially in leaves) at all developmental stages from seed germination to flowering, except in the root tips.

It is found in the plastid. Its subcellular location is the chloroplast. It localises to the plastoglobule. It carries out the reaction L-seryl-[protein] + ATP = O-phospho-L-seryl-[protein] + ADP + H(+). The catalysed reaction is L-threonyl-[protein] + ATP = O-phospho-L-threonyl-[protein] + ADP + H(+). Functionally, kinase that can phosphorylate the tocopherol cyclase VTE1, a key enzyme of tocopherol (vitamin E) metabolism and involved in the recycling of oxidated alpha-tocopherol quinone, possibly stabilizing it at plastoglobules. Also regulates plastoglobule protein composition. Prevents photodamage of chloroplasts under continuous red light, thus working in opposition to ABC1K3. Together with ABC1K1, contributes to plastoglobule (PG) function in prenyl-lipid metabolism, stress response, and thylakoid remodeling. Involved in chlorophyll degradation and in the maintenance of the number of chlorophyll-binding photosynthetic thylakoid membranes. Ensures photosynthetic electron transport by regulating the homeostasis of plastoquinone, beta-carotene and xanthophyll lutein, as well as membrane antioxidant tocopherol metabolism. Seems to affect specifically stability or turnover of D1 protein, product of psbA, one of the four core subunits of the photosystem II (PSII). Required for photooxidative stress responses, including the induction of oxidative stress response genes (e.g. FSD1, CSD1, CAT1, and UTG71C1), to prevent photosystem II core and chlorophyll degradations. The sequence is that of Protein ACTIVITY OF BC1 COMPLEX KINASE 1, chloroplastic from Arabidopsis thaliana (Mouse-ear cress).